Here is a 370-residue protein sequence, read N- to C-terminus: MASLCFQSPSKPISYFQPKSNPSPPLFAKVSVFRCRASVQTLVAVEPEPVFVSVKTFAPATVANLGPGFDFLGCAVDGLGDHVTLRVDPSVRAGEVSISEITGTTTKLSTNPLRNCAGIAAIATMKMLGIRSVGLSLDLHKGLPLGSGLGSSAASAAAAAVAVNEIFGRKLGSDQLVLAGLESEAKVSGYHADNIAPAIMGGFVLIRNYEPLDLKPLRFPSDKDLFFVLVSPDFEAPTKKMRAALPTEIPMVHHVWNSSQAAALVAAVLEGDAVMLGKALSSDKIVEPTRAPLIPGMEAVKKAALEAGAFGCTISGAGPTAVAVIDSEEKGQVIGEKMVEAFWKVGHLKSVASVKKLDNVGARLVNSVSR.

Residues 1–34 constitute a chloroplast transit peptide; it reads MASLCFQSPSKPISYFQPKSNPSPPLFAKVSVFR. 143–154 is an ATP binding site; it reads LPLGSGLGSSAA.

The protein belongs to the GHMP kinase family. Homoserine kinase subfamily.

Its subcellular location is the plastid. It is found in the chloroplast stroma. It catalyses the reaction L-homoserine + ATP = O-phospho-L-homoserine + ADP + H(+). It participates in amino-acid biosynthesis; L-threonine biosynthesis; L-threonine from L-aspartate: step 4/5. Its function is as follows. Catalyzes the ATP-dependent phosphorylation of L-homoserine to L-homoserine phosphate. Is specific for L-homoserine and cannot use other substrates such D-serine, L-serine, D-threonine and L-threonine, galactose or D-homoserine in vitro. Required for susceptibility to the downy mildew pathogen Hyaloperonospora parasitica. The protein is Homoserine kinase (HSK) of Arabidopsis thaliana (Mouse-ear cress).